A 247-amino-acid chain; its full sequence is Small ribosomal subunit protein uS3 (247 aa).

The 69-residue stretch at 38–106 (IRDFLSEGLD…QVQLNILEVK (69 aa)) folds into the KH type-2 domain. Over residues 214–226 (SLMNARDERPSRG) the composition is skewed to basic and acidic residues. Residues 214 to 247 (SLMNARDERPSRGRRERPRRGGARRQRAEQKQEG) are disordered. Residues 227-238 (RRERPRRGGARR) are compositionally biased toward basic residues.

The protein belongs to the universal ribosomal protein uS3 family. As to quaternary structure, part of the 30S ribosomal subunit. Forms a tight complex with proteins S10 and S14.

Functionally, binds the lower part of the 30S subunit head. Binds mRNA in the 70S ribosome, positioning it for translation. This is Small ribosomal subunit protein uS3 from Corynebacterium jeikeium (strain K411).